The following is a 250-amino-acid chain: Silencing boundary-establishment protein FUB1 (250 aa).

Residues 179–250 form a disordered region; it reads PDWSGGLPNP…GFGGSGSGFI (72 aa). Over residues 202 to 213 the composition is skewed to basic and acidic residues; sequence PNRRPAPRREDM. Residues 229 to 250 show a composition bias toward gly residues; sequence PGSGGFGGSGSGGFGGSGSGFI.

Belongs to the proteasome inhibitor PI31 family. As to quaternary structure, interacts with the 20S proteasome.

In terms of biological role, plays a role in the establishment of transcriptional silencing boundaries, preventing the propagation of heterochromatic silencing. The protein is Silencing boundary-establishment protein FUB1 of Saccharomyces cerevisiae (strain ATCC 204508 / S288c) (Baker's yeast).